Here is a 177-residue protein sequence, read N- to C-terminus: Large ribosomal subunit protein uL6 (177 aa).

It belongs to the universal ribosomal protein uL6 family. In terms of assembly, part of the 50S ribosomal subunit.

Functionally, this protein binds to the 23S rRNA, and is important in its secondary structure. It is located near the subunit interface in the base of the L7/L12 stalk, and near the tRNA binding site of the peptidyltransferase center. This chain is Large ribosomal subunit protein uL6, found in Verminephrobacter eiseniae (strain EF01-2).